Here is a 46-residue protein sequence, read N- to C-terminus: Probable butyrate kinase (46 aa).

Belongs to the acetokinase family.

Its subcellular location is the cytoplasm. The enzyme catalyses butanoate + ATP = butanoyl phosphate + ADP. The chain is Probable butyrate kinase (buk) from Geobacillus stearothermophilus (Bacillus stearothermophilus).